The sequence spans 230 residues: UPF0173 metal-dependent hydrolase Dshi_2788 (230 aa).

The protein belongs to the UPF0173 family.

The chain is UPF0173 metal-dependent hydrolase Dshi_2788 from Dinoroseobacter shibae (strain DSM 16493 / NCIMB 14021 / DFL 12).